Reading from the N-terminus, the 311-residue chain is Pseudouridine-5'-phosphate glycosidase (311 aa).

The active-site Proton donor is E32. Residues K96 and V116 each coordinate substrate. D148 lines the Mn(2+) pocket. Residue 150–152 (SAD) coordinates substrate. Residue K169 is the Nucleophile of the active site.

This sequence belongs to the pseudouridine-5'-phosphate glycosidase family. Homotrimer. The cofactor is Mn(2+).

It catalyses the reaction D-ribose 5-phosphate + uracil = psi-UMP + H2O. In terms of biological role, catalyzes the reversible cleavage of pseudouridine 5'-phosphate (PsiMP) to ribose 5-phosphate and uracil. Functions biologically in the cleavage direction, as part of a pseudouridine degradation pathway. This is Pseudouridine-5'-phosphate glycosidase from Roseiflexus sp. (strain RS-1).